The primary structure comprises 146 residues: UPF0178 protein BCA_3127 (146 aa).

It belongs to the UPF0178 family.

In Bacillus cereus (strain 03BB102), this protein is UPF0178 protein BCA_3127.